We begin with the raw amino-acid sequence, 1024 residues long: MSKYKNSSLLNDQGGVRQPSLSNGSSVLGISNQLPPNSLFHLFSTNNQQSTTTPTTVTIQPPSSSISTPSPTTNNTVSGGGGIQTAGSSTSSASSVVGGGGGTTTPTNSNIVVIESNKEDDKECGTILMEINKGIRSGNLGEQIESILFFSHLIKFHPSPLIVNSVITRLSDIFRTTSNTVKYRILKVFQECSSEIHKVSNIEEVLKRIHSVILSNDPIARSLSLRVLGSVPHLIADKLYIHHSIRTCMQSHDQVELEATIFIMDKLCEISPLFSDSIIEKIHTVIQNVETPPITKLKYTRLFRHMHHSHSIATQSKEMLVGLLDLYPSVGFVSVILDTLTNLSLKHILYIDDHIKFLKNYGFSDSRVVVKVIALKCLQKLAITSPHSQFPIIEIFNIIKETPSKSYREIKYNALLLLSILSQSQYTKILELNQANDNDLIDILYQYSLDYDFKLSELSIQTLVNIIVESTDNNNNNNNNNNNNNNNNNNNNNNNNNNNNNNKLIESILNQTVNNICVILKTQFTTSTNNNTNINENKSTLNKTSVFLKSIIRLIKKDPKPLKSITTTIISLLNEIPYSILKSLFHCLSMCIPMNKSVLNQNGWFKLILDYLNNLIIKENSVQLINNNFNNNNNNNNNSNNNNNNIINRNNNGISNGINKQDCKYSIPMSIFMCIFKTFDENNQKIQEITEQLLPLIQYILENPKPDQLWSCYNLAQLSQRHGFHKIAMVIYSTLIHKVESECNYLWLKGLLSIATLENEISIYSITTNKNNTNNNNNNNNSKILNQLSNYHTSIVSLKASSQQERSLQFQEDFILLHEKYLFNILNLKSFLLECNDDGNNNNNNNNNNNNNNNNNNNNNNNNNNEILLKRFLSKSLIFRQLEQKYQLLLNIQSKSINHTVPLDTKQILESFIFSCNLIVKLIDLIVINKNNNNNNNINANGINHQQEQRYQQHQQSQNQELINYFPLFKFCEFIQKKLNQQHSIPSSSSSSSSTTNPISFLDQVLNGLIKIPMVYPSSFYFKF.

2 stretches are compositionally biased toward polar residues: residues 1–11 and 19–36; these read MSKYKNSSLLN and PSLS…QLPP. Disordered regions lie at residues 1 to 109, 472 to 502, and 842 to 863; these read MSKY…PTNS, DNNN…NNNN, and NNNN…NNNN. Low complexity-rich tracts occupy residues 44–77, 85–96, and 473–502; these read STNN…NNTV, TAGSSTSSASSV, and NNNN…NNNN.

It belongs to the Integrator subunit 7 family. Component of the Integrator complex. The core complex associates with protein phosphatase 2A subunits, to form the Integrator-PP2A (INTAC) complex.

The protein localises to the nucleus. It is found in the chromosome. It localises to the cytoplasm. In terms of biological role, component of the integrator complex, a multiprotein complex that terminates RNA polymerase II (Pol II) transcription in the promoter-proximal region of genes. The integrator complex provides a quality checkpoint during transcription elongation by driving premature transcription termination of transcripts that are unfavorably configured for transcriptional elongation: the complex terminates transcription by (1) catalyzing dephosphorylation of the C-terminal domain (CTD) of Pol II subunit polr2a, (2) degrading the exiting nascent RNA transcript via endonuclease activity and (3) promoting the release of Pol II from bound DNA. The integrator complex is also involved in terminating the synthesis of non-coding Pol II transcripts, such as enhancer RNAs (eRNAs), small nuclear RNAs (snRNAs), telomerase RNAs and long non-coding RNAs (lncRNAs). The sequence is that of Integrator complex subunit 7 homolog (ints7) from Dictyostelium discoideum (Social amoeba).